Consider the following 185-residue polypeptide: Vomeronasal secretory protein 2 (185 aa).

The N-terminal stretch at 1 to 19 (MKSLLLTVTLSSLVATLQT) is a signal peptide. A disulfide bond links Cys80 and Cys172.

This sequence belongs to the calycin superfamily. Lipocalin family. In terms of tissue distribution, specifically expressed in vomeronasal and posterior glands of the nasal septum, the ducts of which open into the lumen of the vomeronasal organ.

Its subcellular location is the secreted. In terms of biological role, transport of lipophilic molecules, possible pheromone-carrier. This chain is Vomeronasal secretory protein 2 (Lcn4), found in Mus musculus (Mouse).